Consider the following 388-residue polypeptide: Succinate--CoA ligase [ADP-forming] subunit beta (388 aa).

The ATP-grasp domain maps to 9-244 (KQLFARYGMP…LSQEDERESR (236 aa)). ATP is bound by residues Lys-46, 53–55 (GRG), Glu-99, Thr-102, and Glu-107. Mg(2+)-binding residues include Asn-199 and Asp-213. Residues Asn-264 and 321–323 (GIV) contribute to the substrate site.

It belongs to the succinate/malate CoA ligase beta subunit family. Heterotetramer of two alpha and two beta subunits. Mg(2+) serves as cofactor.

It carries out the reaction succinate + ATP + CoA = succinyl-CoA + ADP + phosphate. It catalyses the reaction GTP + succinate + CoA = succinyl-CoA + GDP + phosphate. Its pathway is carbohydrate metabolism; tricarboxylic acid cycle; succinate from succinyl-CoA (ligase route): step 1/1. Its function is as follows. Succinyl-CoA synthetase functions in the citric acid cycle (TCA), coupling the hydrolysis of succinyl-CoA to the synthesis of either ATP or GTP and thus represents the only step of substrate-level phosphorylation in the TCA. The beta subunit provides nucleotide specificity of the enzyme and binds the substrate succinate, while the binding sites for coenzyme A and phosphate are found in the alpha subunit. The protein is Succinate--CoA ligase [ADP-forming] subunit beta of Serratia proteamaculans (strain 568).